A 2144-amino-acid polypeptide reads, in one-letter code: Alpha-protein kinase 2 (2144 aa).

Residues proline 7 to glutamine 105 enclose the Ig-like 1 domain. Cysteines 33 and 98 form a disulfide. Disordered stretches follow at residues glutamate 425–methionine 473, serine 500–glycine 575, glutamate 727–serine 775, glutamine 845–serine 864, glutamate 881–tyrosine 907, serine 1011–glutamine 1065, aspartate 1316–methionine 1340, glycine 1471–valine 1509, cysteine 1565–asparagine 1587, glutamate 1629–histidine 1696, and glutamate 1720–alanine 1754. A compositionally biased stretch (basic and acidic residues) spans serine 500–proline 511. A compositionally biased stretch (basic and acidic residues) spans arginine 853–serine 864. The segment covering proline 897–proline 906 has biased composition (polar residues). Residues aspartate 1574–asparagine 1587 show a composition bias toward polar residues. Composition is skewed to basic and acidic residues over residues glutamate 1631 to cysteine 1645 and proline 1732 to alanine 1754. One can recognise an Ig-like 2 domain in the interval proline 1759–threonine 1847. A disulfide bridge links cysteine 1781 with cysteine 1831. An Alpha-type protein kinase domain is found at lysine 1874–leucine 2106. Positions asparagine 2109–threonine 2144 are disordered.

It belongs to the protein kinase superfamily. Alpha-type protein kinase family. ALPK subfamily.

Its subcellular location is the basolateral cell membrane. The enzyme catalyses L-seryl-[protein] + ATP = O-phospho-L-seryl-[protein] + ADP + H(+). It carries out the reaction L-threonyl-[protein] + ATP = O-phospho-L-threonyl-[protein] + ADP + H(+). Its function is as follows. Protein kinase that recognizes phosphorylation sites in which the surrounding peptides have an alpha-helical conformation. Regulates cardiac development and cardiomyocyte differentiation by negatively regulating Wnt/beta-catenin signaling. In Mus musculus (Mouse), this protein is Alpha-protein kinase 2.